A 193-amino-acid chain; its full sequence is 3-isopropylmalate dehydratase small subunit (193 aa).

Belongs to the LeuD family. LeuD type 1 subfamily. In terms of assembly, heterodimer of LeuC and LeuD.

It carries out the reaction (2R,3S)-3-isopropylmalate = (2S)-2-isopropylmalate. It functions in the pathway amino-acid biosynthesis; L-leucine biosynthesis; L-leucine from 3-methyl-2-oxobutanoate: step 2/4. Catalyzes the isomerization between 2-isopropylmalate and 3-isopropylmalate, via the formation of 2-isopropylmaleate. The polypeptide is 3-isopropylmalate dehydratase small subunit (Bacillus cereus (strain 03BB102)).